The following is an 87-amino-acid chain: Small archaeal modifier protein 1 (87 aa).

Gly87 is subject to 1-thioglycine; alternate. Gly87 is modified (glycyl adenylate; alternate). Gly87 participates in a covalent cross-link: Glycyl lysine isopeptide (Gly-Lys) (interchain with K-? in acceptor proteins); alternate.

The C-terminal glycine is likely acyl-adenylated (-COAMP) by UbaA, and also probably thiocarboxylated (-COSH) to function in sulfur transfer.

Functions as a protein modifier covalently attached to lysine residues of substrate proteins, as well as a sulfur carrier in molybdenum cofactor (MoCo) biosynthesis. The protein modification process is termed sampylation and involves the formation of an isopeptide bond between the SAMP1 C-terminal glycine carboxylate and the epsilon-amino group of lysine residues on target proteins. May serve as a proteolytic signal in the cell to target proteins for degradation by proteasomes. This is Small archaeal modifier protein 1 (samp1) from Haloferax volcanii (strain ATCC 29605 / DSM 3757 / JCM 8879 / NBRC 14742 / NCIMB 2012 / VKM B-1768 / DS2) (Halobacterium volcanii).